Consider the following 80-residue polypeptide: Venom protein HGE029 (80 aa).

The signal sequence occupies residues methionine 1–alanine 22.

The protein belongs to the non-disulfide-bridged peptide (NDBP) superfamily. Long chain multifunctional peptide (group 2) family. As to expression, expressed by the venom gland.

It is found in the secreted. The polypeptide is Venom protein HGE029 (Hoffmannihadrurus gertschi (Scorpion)).